The sequence spans 243 residues: UTP--glucose-1-phosphate uridylyltransferase AglF (243 aa).

This sequence belongs to the UDPGP type 2 family.

It carries out the reaction alpha-D-glucose 1-phosphate + UTP + H(+) = UDP-alpha-D-glucose + diphosphate. It participates in cell surface structure biogenesis; S-layer biogenesis. In terms of biological role, involved in the assembly of a N-linked pentasaccharide that decorates the S-layer glycoprotein and flagellins. Involved in the biosynthesis of the hexuronic acid found at position 3 of the pentasaccharide. This is UTP--glucose-1-phosphate uridylyltransferase AglF (aglF) from Haloferax volcanii (strain ATCC 29605 / DSM 3757 / JCM 8879 / NBRC 14742 / NCIMB 2012 / VKM B-1768 / DS2) (Halobacterium volcanii).